The primary structure comprises 289 residues: MSAPTMRSTSILTEHLGYPPISLVDDIINAVNEIMYKCTAAMEKYLLSKSKIGEEDYGEEIKSGVAKLESLLENSVDKNFDKLELYVLRNVLRIPEEYLDANVFRLENQKDLVIVDENELKKSEEKLREKVNDVELAFKKNEMLLKRVTKVKRLLFTIRGFKQKLNELLKCKDDVQLQKILESLKPIDDTMTLLTDSLRKLYVDSESTSSTEEVEALLQRLKTNGKQNNKDFRTRYIDIRTNNVLRKLGLLGDKEDEKQSAKPDARTQAGDIVSIDIEEPQLDLLDDVL.

Positions 105–147 form a coiled coil; it reads RLENQKDLVIVDENELKKSEEKLREKVNDVELAFKKNEMLLKR.

Belongs to the mis12 family. As to quaternary structure, component of the MIND kinetochore complex, which is composed of at least MTW1, NNF1, NSL1 and DSN1.

Its subcellular location is the chromosome. The protein resides in the centromere. It localises to the kinetochore. It is found in the cytoplasm. The protein localises to the cytoskeleton. Its subcellular location is the spindle pole. Functionally, acts as an essential component of the kinetochore MIND complex, which is required for the spindle checkpoint and kinetochore integrity. MIND plays a role in establishing a bipolar spindle-kinetochore interaction by joining kinetochore subunits contacting DNA to those contacting microtubules. The chain is Kinetochore-associated protein MTW1 (MTW1) from Saccharomyces cerevisiae (strain ATCC 204508 / S288c) (Baker's yeast).